A 782-amino-acid polypeptide reads, in one-letter code: DNA repair and recombination protein RAD54-like (782 aa).

Over residues 1-20 (MRRSLAPSQRGGQRLSSRND) the composition is skewed to polar residues. The tract at residues 1–28 (MRRSLAPSQRGGQRLSSRNDFTPPLLKK) is disordered. The tract at residues 2-9 (RRSLAPSQ) is required for chromatin remodeling, strand pairing activities and coupling of ATPase activity. Position 22 is a phosphothreonine (threonine 22). The 176-residue stretch at 168–343 (EGKRGNFNGC…FSLVNFVNPE (176 aa)) folds into the Helicase ATP-binding domain. 181-188 (DEMGLGKT) contacts ATP. Positions 294–297 (DEGH) match the DEGH box motif. The Helicase C-terminal domain maps to 501 to 658 (LLDFMLAAIR…NNESAEKHFT (158 aa)). The segment covering 741–753 (SQKIEATPATETS) has biased composition (polar residues). Positions 741–782 (SQKIEATPATETSVEAKLEPERRKRPAMPLSDDSADEDFQGF) are disordered. Acidic residues predominate over residues 773–782 (DSADEDFQGF).

The protein belongs to the SNF2/RAD54 helicase family. Interacts (via N-terminus) with spn-A/Rad51.

Its subcellular location is the nucleus. Functionally, involved in mitotic DNA repair and meiotic recombination. Functions in the recombinational DNA repair pathway. Essential for interhomolog gene conversion (GC), but may have a less important role in intersister GC than spn-A/Rad51. In the presence of DNA, spn-A/Rad51 enhances the ATPase activity of okr/Rad54. The chain is DNA repair and recombination protein RAD54-like from Drosophila persimilis (Fruit fly).